Here is a 462-residue protein sequence, read N- to C-terminus: Glycoprotein endo-alpha-1,2-mannosidase (462 aa).

The Cytoplasmic segment spans residues 1 to 8 (MAKFRRGT). Residues 9–29 (CIILALFILFIFSLMMGLKML) form a helical; Signal-anchor for type II membrane protein membrane-spanning segment. Residues 30 to 462 (RPNTATFGAP…YALDHQLPVS (433 aa)) are Lumenal-facing. The tract at residues 60-462 (DFQKSDRINS…YALDHQLPVS (403 aa)) is catalytic.

It belongs to the glycosyl hydrolase 99 family. Undergoes proteolytic cleavage in the C-terminal region.

It localises to the golgi apparatus membrane. It carries out the reaction N-{alpha-Glc-(1-&gt;3)-alpha-Man-(1-&gt;2)-alpha-Man-(1-&gt;2)-alpha-Man-(1-&gt;3)-[alpha-Man-(1-&gt;2)-alpha-Man-(1-&gt;3)-[alpha-Man-(1-&gt;2)-alpha-Man-(1-&gt;6)]-alpha-Man-(1-&gt;6)]-beta-Man-(1-&gt;4)-beta-GlcNAc-(1-&gt;4)-beta-GlcNAc}-L-asparaginyl-[protein] + H2O = alpha-D-glucosyl-(1-&gt;3)-D-mannopyranose + N(4)-{alpha-D-Man-(1-&gt;2)-alpha-D-Man-(1-&gt;3)-[alpha-D-Man-(1-&gt;2)-alpha-D-Man-(1-&gt;3)-[alpha-D-Man-(1-&gt;2)-alpha-D-Man-(1-&gt;6)]-alpha-D-Man-(1-&gt;6)]-beta-D-Man-(1-&gt;4)-beta-D-GlaNAc-(1-&gt;4)-beta-D-GlcNAc}-L-asparaginyl-[protein] (N-glucan mannose isomer 8A1,2,3B1,2). This is Glycoprotein endo-alpha-1,2-mannosidase (MANEA) from Pongo abelii (Sumatran orangutan).